The chain runs to 326 residues: Ribose-phosphate pyrophosphokinase (326 aa).

ATP contacts are provided by residues 45–47 (NGE) and 104–105 (RQ). Residues His138 and Asp178 each coordinate Mg(2+). Lys202 is an active-site residue. Residues Arg204, Asp230, and 234 to 238 (DTGGT) contribute to the D-ribose 5-phosphate site.

This sequence belongs to the ribose-phosphate pyrophosphokinase family. Class I subfamily. As to quaternary structure, homohexamer. It depends on Mg(2+) as a cofactor.

It is found in the cytoplasm. It carries out the reaction D-ribose 5-phosphate + ATP = 5-phospho-alpha-D-ribose 1-diphosphate + AMP + H(+). The protein operates within metabolic intermediate biosynthesis; 5-phospho-alpha-D-ribose 1-diphosphate biosynthesis; 5-phospho-alpha-D-ribose 1-diphosphate from D-ribose 5-phosphate (route I): step 1/1. Involved in the biosynthesis of the central metabolite phospho-alpha-D-ribosyl-1-pyrophosphate (PRPP) via the transfer of pyrophosphoryl group from ATP to 1-hydroxyl of ribose-5-phosphate (Rib-5-P). In Mycobacterium bovis (strain ATCC BAA-935 / AF2122/97), this protein is Ribose-phosphate pyrophosphokinase.